A 287-amino-acid chain; its full sequence is Troponin T, cardiac muscle (287 aa).

2 stretches are compositionally biased toward acidic residues: residues 1–31 (MSDV…EEAG) and 44–59 (EDGE…DGPV). Disordered regions lie at residues 1–85 (MSDV…GERV) and 124–208 (KDRI…EKKK). Ser2 is subject to N-acetylserine. Ser2 bears the Phosphoserine; by CK2 mark. Residues 66 to 79 (APGPFMPNLVPPKI) show a composition bias toward pro residues. Composition is skewed to basic and acidic residues over residues 124–173 (KDRI…DEAR) and 192–208 (QAER…EKKK). Phosphoserine; by PKC/PRKCA is present on Ser197. At Thr202 the chain carries Phosphothreonine; by PKC/PRKCA and RAF1. Thr283 bears the Phosphothreonine; by PKC/PRKCA mark.

This sequence belongs to the troponin T family. Post-translationally, phosphorylation at Thr-202 by PRKCA induces significant reduction in myofilament calcium sensitivity and actomyosin ATPase activity.

Troponin T is the tropomyosin-binding subunit of troponin, the thin filament regulatory complex which confers calcium-sensitivity to striated muscle actomyosin ATPase activity. This Ovis aries (Sheep) protein is Troponin T, cardiac muscle (TNNT2).